A 425-amino-acid chain; its full sequence is (S)-6-hydroxynicotine oxidase (425 aa).

FAD is bound by residues Ser-12, Glu-31, 38–39, and 56–59; these read GR and GGAY. Asn-166 lines the (S)-6-hydroxynicotine pocket. Val-226 serves as a coordination point for FAD. Tyr-311, Phe-326, and Trp-371 together coordinate (S)-6-hydroxynicotine. Residues Ser-398 and 406–408 contribute to the FAD site; that span reads GYI. Residue Tyr-407 participates in (S)-6-hydroxynicotine binding.

It belongs to the flavin monoamine oxidase family. As to quaternary structure, homodimer. FAD is required as a cofactor.

The protein localises to the cytoplasm. It carries out the reaction (S)-6-hydroxynicotine + O2 + H2O = 6-hydroxypseudooxynicotine + H2O2. It catalyses the reaction (S)-6-hydroxynicotine + O2 = 6-hydroxy-N-methylmyosmine + H2O2. The protein operates within alkaloid degradation; nicotine degradation; 6-hydroxypseudooxynicotine from nicotine (S-isomer route): step 2/2. With respect to regulation, inhibited by (R)-6-hydroxynicotine. Inhibited by high concentrations of phenanthroline. Activity is strongly affected by Hg(2+) and p-chloromercuriphenylsulfonate, but not by N-ethylmaleimide and 5,5'-dithiobis-(2-nitrobenzoate). Functionally, involved in the degradation of L-nicotine. Catalyzes the oxidation of (S)-6-hydroxynicotine (6-hydroxy-L-nicotine) to 6-hydroxypseudooxynicotine. Oxidation of the pyrrolidine ring of (S)-6-hydroxynicotine leads to the formation of the optically inactive 6-hydroxy-N-methylmyosmine, which hydrolyzes spontaneously to 6-hydroxypseudooxynicotine. Acts with absolute stereospecificity on the L-form of 6-hydroxynicotine. Can also use (S)-6-hydroxynornicotine. This is (S)-6-hydroxynicotine oxidase from Paenarthrobacter nicotinovorans (Arthrobacter nicotinovorans).